The following is a 273-amino-acid chain: WIMGHMVNSIAQIDEFVNLGANSIETDVSFDKQANPEYTYHGTPCDCGRDCLHWENFNDFLKGLRKATTPGDSKYHEKLILVVFDLKTGSLYDNQAYDAGTKLAKNLLEHYWNNGNNGGRAYIVLSIPNLNHYKLIAGFKDTLKSEGHEDLLEKVGHDFSGNDDIPDVENAYKKAGVTGHVWQSDGITNCLPRTLKRVRLAIANRDSGSGIINKVYYWTVDKRSTTRDSLDAGVDGIMTNYPDVIADVLSESAYKNKYRIATYEDNPWDTFKA.

His-5 is an active-site residue. Residues Glu-25 and Asp-27 each contribute to the Mg(2+) site. His-41 acts as the Nucleophile in catalysis. Disulfide bonds link Cys-45–Cys-51 and Cys-47–Cys-190. A Mg(2+)-binding site is contributed by Asp-85.

It belongs to the arthropod phospholipase D family. Class II subfamily. The cofactor is Mg(2+). As to expression, expressed by the venom gland.

Its subcellular location is the secreted. The enzyme catalyses an N-(acyl)-sphingosylphosphocholine = an N-(acyl)-sphingosyl-1,3-cyclic phosphate + choline. The catalysed reaction is an N-(acyl)-sphingosylphosphoethanolamine = an N-(acyl)-sphingosyl-1,3-cyclic phosphate + ethanolamine. It carries out the reaction a 1-acyl-sn-glycero-3-phosphocholine = a 1-acyl-sn-glycero-2,3-cyclic phosphate + choline. It catalyses the reaction a 1-acyl-sn-glycero-3-phosphoethanolamine = a 1-acyl-sn-glycero-2,3-cyclic phosphate + ethanolamine. Functionally, dermonecrotic toxins cleave the phosphodiester linkage between the phosphate and headgroup of certain phospholipids (sphingolipid and lysolipid substrates), forming an alcohol (often choline) and a cyclic phosphate. This toxin acts on sphingomyelin (SM). It may also act on ceramide phosphoethanolamine (CPE), lysophosphatidylcholine (LPC) and lysophosphatidylethanolamine (LPE), but not on lysophosphatidylserine (LPS), and lysophosphatidylglycerol (LPG). It acts by transphosphatidylation, releasing exclusively cyclic phosphate products as second products. Induces dermonecrosis, hemolysis, increased vascular permeability, edema, inflammatory response, and platelet aggregation. This is Dermonecrotic toxin LruSicTox-alphaIC1c from Loxosceles rufescens (Mediterranean recluse spider).